A 291-amino-acid chain; its full sequence is Formamidopyrimidine-DNA glycosylase (291 aa).

Catalysis depends on proline 2, which acts as the Schiff-base intermediate with DNA. The Proton donor role is filled by glutamate 3. Catalysis depends on lysine 58, which acts as the Proton donor; for beta-elimination activity. Residues histidine 100, arginine 123, and lysine 166 each coordinate DNA. Residues 257-291 (SVYGREGKECLQCGTPIIRILQSGRSSFYCSQCQK) form an FPG-type zinc finger. The active-site Proton donor; for delta-elimination activity is arginine 281.

It belongs to the FPG family. Monomer. Zn(2+) serves as cofactor.

It catalyses the reaction Hydrolysis of DNA containing ring-opened 7-methylguanine residues, releasing 2,6-diamino-4-hydroxy-5-(N-methyl)formamidopyrimidine.. The enzyme catalyses 2'-deoxyribonucleotide-(2'-deoxyribose 5'-phosphate)-2'-deoxyribonucleotide-DNA = a 3'-end 2'-deoxyribonucleotide-(2,3-dehydro-2,3-deoxyribose 5'-phosphate)-DNA + a 5'-end 5'-phospho-2'-deoxyribonucleoside-DNA + H(+). Involved in base excision repair of DNA damaged by oxidation or by mutagenic agents. Acts as a DNA glycosylase that recognizes and removes damaged bases. Has a preference for oxidized purines, such as 7,8-dihydro-8-oxoguanine (8-oxoG). Has AP (apurinic/apyrimidinic) lyase activity and introduces nicks in the DNA strand. Cleaves the DNA backbone by beta-delta elimination to generate a single-strand break at the site of the removed base with both 3'- and 5'-phosphates. The chain is Formamidopyrimidine-DNA glycosylase from Bartonella tribocorum (strain CIP 105476 / IBS 506).